A 729-amino-acid polypeptide reads, in one-letter code: Fatty acid oxidation complex subunit alpha (729 aa).

The enoyl-CoA hydratase/isomerase stretch occupies residues 1–189 (MLYKGDTLYV…KIGLIDGIVK (189 aa)). Substrate is bound at residue aspartate 296. The tract at residues 311–729 (EMPKQAAVLG…ARPVGALKTA (419 aa)) is 3-hydroxyacyl-CoA dehydrogenase. Residues methionine 324, aspartate 343, 400 to 402 (VVE), lysine 407, and serine 429 contribute to the NAD(+) site. Histidine 450 serves as the catalytic For 3-hydroxyacyl-CoA dehydrogenase activity. Asparagine 453 is an NAD(+) binding site. Residues asparagine 500 and tyrosine 660 each contribute to the substrate site. The disordered stretch occupies residues 708 to 729 (RHNEPYYPPVEPARPVGALKTA).

The protein in the N-terminal section; belongs to the enoyl-CoA hydratase/isomerase family. In the C-terminal section; belongs to the 3-hydroxyacyl-CoA dehydrogenase family. As to quaternary structure, heterotetramer of two alpha chains (FadB) and two beta chains (FadA).

The catalysed reaction is a (3S)-3-hydroxyacyl-CoA + NAD(+) = a 3-oxoacyl-CoA + NADH + H(+). It catalyses the reaction a (3S)-3-hydroxyacyl-CoA = a (2E)-enoyl-CoA + H2O. It carries out the reaction a 4-saturated-(3S)-3-hydroxyacyl-CoA = a (3E)-enoyl-CoA + H2O. The enzyme catalyses (3S)-3-hydroxybutanoyl-CoA = (3R)-3-hydroxybutanoyl-CoA. The catalysed reaction is a (3Z)-enoyl-CoA = a 4-saturated (2E)-enoyl-CoA. It catalyses the reaction a (3E)-enoyl-CoA = a 4-saturated (2E)-enoyl-CoA. Its pathway is lipid metabolism; fatty acid beta-oxidation. Functionally, involved in the aerobic and anaerobic degradation of long-chain fatty acids via beta-oxidation cycle. Catalyzes the formation of 3-oxoacyl-CoA from enoyl-CoA via L-3-hydroxyacyl-CoA. It can also use D-3-hydroxyacyl-CoA and cis-3-enoyl-CoA as substrate. The sequence is that of Fatty acid oxidation complex subunit alpha from Enterobacter sp. (strain 638).